The following is a 180-amino-acid chain: 6,7-dimethyl-8-ribityllumazine synthase (180 aa).

5-amino-6-(D-ribitylamino)uracil contacts are provided by residues Phe23, Ser61–Glu63, and Ala85–Ile87. Gln90–Thr91 contributes to the (2S)-2-hydroxy-3-oxobutyl phosphate binding site. The active-site Proton donor is His93. 5-amino-6-(D-ribitylamino)uracil is bound at residue Phe118. Arg132 contributes to the (2S)-2-hydroxy-3-oxobutyl phosphate binding site.

It belongs to the DMRL synthase family.

It catalyses the reaction (2S)-2-hydroxy-3-oxobutyl phosphate + 5-amino-6-(D-ribitylamino)uracil = 6,7-dimethyl-8-(1-D-ribityl)lumazine + phosphate + 2 H2O + H(+). The protein operates within cofactor biosynthesis; riboflavin biosynthesis; riboflavin from 2-hydroxy-3-oxobutyl phosphate and 5-amino-6-(D-ribitylamino)uracil: step 1/2. Its function is as follows. Catalyzes the formation of 6,7-dimethyl-8-ribityllumazine by condensation of 5-amino-6-(D-ribitylamino)uracil with 3,4-dihydroxy-2-butanone 4-phosphate. This is the penultimate step in the biosynthesis of riboflavin. The sequence is that of 6,7-dimethyl-8-ribityllumazine synthase from Gloeobacter violaceus (strain ATCC 29082 / PCC 7421).